We begin with the raw amino-acid sequence, 7214 residues long: Nonribosomal peptide synthetase atnA (7214 aa).

Residues 257-651 (ERKALEQPHA…VGRKDTQVKI (395 aa)) are adenylation 1. One can recognise a Carrier 1 domain in the interval 786–862 (EPVTETEKAV…AMSQIAVELS (77 aa)). An O-(pantetheine 4'-phosphoryl)serine modification is found at Ser823. Residues 899 to 1318 (EDAYPATALQ…LVSQKDYTQI (420 aa)) are condensation 1. The segment at 1340 to 1735 (QVLATPDAPA…ARKDTQAKVR (396 aa)) is adenylation 2. The 77-residue stretch at 1877–1953 (QPTSDIEKKV…ALAGRAQYIE (77 aa)) folds into the Carrier 2 domain. Ser1914 carries the O-(pantetheine 4'-phosphoryl)serine modification. An epimerization region spans residues 1962-2384 (PEAEVIDEWF…RQVLETGIDE (423 aa)). The segment at 2431–2845 (SPCSPMQLGL…MLSPLDRASL (415 aa)) is condensation 2. Residues 2866–3262 (QNARKRPHAL…VGRKDTQVKV (397 aa)) are adenylation 3. Residues 3398–3472 (ALETPMEETI…DMARIVVAAY (75 aa)) form the Carrier 3 domain. O-(pantetheine 4'-phosphoryl)serine is present on Ser3433. The condensation 3 stretch occupies residues 3510-3904 (VEDVYPSTSL…QLCENEDGRL (395 aa)). An adenylation 4 region spans residues 3943 to 4339 (ERARLHPDLL…VGRKDSQVKL (397 aa)). The Carrier 4 domain occupies 4476 to 4552 (VPGSEAEKVI…ELAGRVTSIS (77 aa)). Ser4513 is subject to O-(pantetheine 4'-phosphoryl)serine. The segment at 4601-5033 (VEDVYPCSPL…TSAAMRAQLL (433 aa)) is condensation 4. Residues 5051–5446 (FHRTALRYPE…VGRKDTQIKF (396 aa)) form an adenylation 5 region. Positions 5489–5515 (FITTEGGSGHENKGSPSLKGSSGDPVS) are disordered. In terms of domain architecture, Carrier 5 spans 5591–5667 (APRTAMEKRL…QMANIVARNA (77 aa)). Ser5628 is subject to O-(pantetheine 4'-phosphoryl)serine. The tract at residues 5707–6123 (QDVYPCTPLQ…HLLGDNEIKM (417 aa)) is condensation 5. The tract at residues 6145 to 6543 (ERAVLQPEAI…GRKDTQIKLR (399 aa)) is adenylation 6. The 84-residue stretch at 6683–6766 (DPADKLALAL…DVARMIEHGN (84 aa)) folds into the Carrier 6 domain. O-(pantetheine 4'-phosphoryl)serine is present on Ser6725. Residues 6814 to 7194 (ILLTGATGFL…KSISYMRQIG (381 aa)) form a thioesterase (TE) domain region. The disordered stretch occupies residues 6895–6915 (STVEGRDHPGSESGSTAGPAE).

It belongs to the NRP synthetase family.

It participates in secondary metabolite biosynthesis. Functionally, nonribosomal peptide synthetase; part of the gene cluster that mediates the biosynthesis of aspercryptins, linear lipopeptides built from six amino acids including 2 highly unusual and nonproteogenic amino acids, 2-amino-octanoic acid (2aoa) and 2-amino-dodecanol (2adol). The core structure of aspercryptins is as follows: Ser/Ala-Thr-Ile/Val-2aoa-Asn-2adol. The first step of aspercryptin biosynthesis is the generation of the fatty acid precursors, octanoic and dodecanoic acids, by the FAS subunits atnF and atnM. The fatty acid precursors are likely transformed into the corresponding alpha-amino fatty acids in three steps. First, they are hydroxylated by the cytochrome P450 monooxygenase atnE, then oxidized to the corresponding alpha-keto acids by the NAD(P)-dependent oxidoreductase atnD, and finally converted to the alpha-amino fatty acids by the PLP-dependent aminotransferases atnH or atnJ. the alpha-amino fatty acids, 2-amino-octanoic and 2-amino-dodecanoic acids, are recognized, activated, and covalently tethered to the NRPS atnA by its fourth and sixth adenylation domains. The second module of atnA is the Thr module and contains an epimerase (E) domain responsible for the epimerization of Thr to D-allo-Thr. Additionally, despite atnA having only one epimerase domain, the first amino acid of aspercryptin A1 is D-Ser, suggesting that serine is either loaded directly as D-Ser on the first module or that the epimerase domain in the threonine module epimerizes both L-Ser and L-Thr. After condensation of the hexapeptide of aspercryptin, the C-terminal reductase (TE) domain might be involved in the reductive release and production of the aldehyde hexapeptide. Further reduction would generate aspercryptins. The variety of aspercryptins produced reflects the flexibility of the atnA NRPS, allowing incorporation of alanine instead of serine, valine for isoleucine, and a C10 fatty amino alcohol instead of the C12 version. AtnB seems to be involved in the selectivity for Ile versus Val by the third module. Moreover, type B, C and D aspercryptins have an additional N-terminal cichorine, acetyl and propionyl group respectively. The polypeptide is Nonribosomal peptide synthetase atnA (Emericella nidulans (strain FGSC A4 / ATCC 38163 / CBS 112.46 / NRRL 194 / M139) (Aspergillus nidulans)).